The following is a 135-amino-acid chain: UPF0299 membrane protein PC1_1498 (135 aa).

The next 4 membrane-spanning stretches (helical) occupy residues 5–25 (FIVC…LLAG), 30–50 (ALLP…FTLL), 63–83 (GCHL…VGVM), and 93–113 (FGPI…VVGF).

This sequence belongs to the UPF0299 family.

Its subcellular location is the cell inner membrane. This is UPF0299 membrane protein PC1_1498 from Pectobacterium carotovorum subsp. carotovorum (strain PC1).